The sequence spans 393 residues: Cytochrome b (393 aa).

4 helical membrane-spanning segments follow: residues 38–58, 82–104, 119–139, and 185–205; these read FGSL…FLAM, WLLR…LHIF, VWCL…IGYV, and FFSL…LHLA. 2 residues coordinate heme b: His88 and His102. Residues His189 and His203 each coordinate heme b. His208 serves as a coordination point for a ubiquinone. 4 helical membrane passes run 231–251, 295–315, 327–347, and 354–373; these read FYVK…IWIF, VGGV…PFFK, IYQG…WIGC, and FVTI…AITP.

This sequence belongs to the cytochrome b family. In terms of assembly, the main subunits of complex b-c1 are: cytochrome b, cytochrome c1 and the Rieske protein. Requires heme b as cofactor. In terms of processing, first mitochondrial-encoded protein to be shown to have its N-terminal methionine cleaved off.

The protein resides in the mitochondrion inner membrane. In terms of biological role, component of the ubiquinol-cytochrome c reductase complex (complex III or cytochrome b-c1 complex) that is part of the mitochondrial respiratory chain. The b-c1 complex mediates electron transfer from ubiquinol to cytochrome c. Contributes to the generation of a proton gradient across the mitochondrial membrane that is then used for ATP synthesis. The protein is Cytochrome b (MT-CYB) of Solanum tuberosum (Potato).